The chain runs to 204 residues: Large ribosomal subunit protein eL15 (204 aa).

It belongs to the eukaryotic ribosomal protein eL15 family. Component of the large ribosomal subunit.

It is found in the cytoplasm. Functionally, component of the large ribosomal subunit. The ribosome is a large ribonucleoprotein complex responsible for the synthesis of proteins in the cell. This chain is Large ribosomal subunit protein eL15 (rpl15), found in Hypophthalmichthys molitrix (Silver carp).